The chain runs to 620 residues: Guanylate cyclase soluble subunit beta-1 (620 aa).

Histidine 105 is a binding site for heme. A Guanylate cyclase domain is found at 421–554 (TILFSGIVGF…NTVNLTSRTE (134 aa)).

This sequence belongs to the adenylyl cyclase class-4/guanylyl cyclase family. In terms of assembly, the active enzyme is formed by a heterodimer of an alpha and a beta subunit. Heterodimer with GUCY1A1. Can also form inactive homodimers in vitro. Heme serves as cofactor.

It localises to the cytoplasm. It carries out the reaction GTP = 3',5'-cyclic GMP + diphosphate. Activated by nitric oxide in the presence of magnesium or manganese ions. In terms of biological role, mediates responses to nitric oxide (NO) by catalyzing the biosynthesis of the signaling molecule cGMP. The chain is Guanylate cyclase soluble subunit beta-1 (Gucy1b1) from Mus musculus (Mouse).